Consider the following 1332-residue polypeptide: MTERIPIKNYQRTNAKALLKLTEKLFNKNFFDLYLTSQQLVVLEYLLSISSEEDKLKAWDYFLKGNIALNVEKSFPLTQEEEHHGAVSPAVDTRSDDVSSQTIKDNNNTNTNTSISNENHVENEIEDKGDNAIANEDNFVNNDESDNVEEDLFKLDLEDLKQQISGTRFIGNLSLKIRYVLWQCAIDYIYCDRNEFGDENDTEYTLLDVEEKEEEEIGKNEKPQNKEGISKFAEDEDYDDEDENYDEDSTDVKNVDDPPKNLDSISSSNIEIDDERRLVLNISISKETLSKLKTNNVEEIMGNWNKIYHSFEYDKETMIKRLKLEESDKMIEKGKKKRSRSDLEAATDEQDRENTNDEPDTNQKLPTPEGSTFSDTGNKRPKQSNLDLTVNLGIENLSLKHLLSSIQQKKSQLGISDYELKHLIMDVRKNRSKWTSDERIGQEELYEACEKVVLELRNYTEHSTPFLNKVSKREAPNYHQIIKKSMDLNTVLKKLKSFQYDSKQEFVDDIMLIWKNCLTYNSDPSHFLRGHAIAMQKKSLQLIRMIPNITIRNRADLEKEIEDMEKDKDYELDEEEEVAGSGRKGLNMGAHMLAKENGKVSEKDSSKTVKDEAPTNDDKLTSVIPEGEKEKDKTASSTVTVHENVNKNEIKENGKNEEQDMVEESSKTEDSSKDADAAKKDTEDGLQDKTAENKEAGENNEEEEDDDDEDEDEDMVDSQSYLLEKDDDRDDLEISVWKTVTAKVRAEICLKRTEYFKNGKLNSDSEAFLKNPQRMKRFDQLFLEYKEQKALESYRQKIEQNSIMKNGFGTVLKQEDDDQLQFHNDHSLNGNEAFEKQPNDIELDDTRFLQEYDISNAIPDIVYEGVNTKTLDKMEDASVDRMLQNGINKQSRFLANKDLGLTPKMNQNITLIQQIRHICHKISLIRMLQSPLSAQNSRSNPNAFLNNHIYNYTIIDDSLDIDPVSQLPTHDYKNNRELIWKFMHKNISKVAMANGFETAHPSAINMLTEIAGDYLSNLIKTLKLHHETNSLNRGTNVEMLQTTLLENGINRPDDLFSYVESEFGKKTKKLQDIKQKLESFLRALLRPTLQELSERNFEDESQSFFTGDFASELTGEDFFGFRELGLEKEFGVLSSSVPLQLLTTQFQTVDGETKVQAKKIQPEESDSIVYKKITKGMLDAGSFWNTLLPLLQKDYERSKAYIAKQSKSSANDKTSMTSTEDNSFALLEEDQFVSKKTATKARLPPTGKISTTYKKKPIASAFILPEEDLENDVKADPTTTVNAKVGAENDGDSSLFLRTPQPLDPLDMDDAFDDTNMGSNSSFSLSLPRLNQ.

Phosphothreonine; by ATM or ATR is present on Thr78. Disordered stretches follow at residues 80–118, 209–268, and 331–384; these read EEEHHGAVSPAVDTRSDDVSSQTIKDNNNTNTNTSISNE, VEEK…ISSS, and IEKG…PKQS. Ser88 bears the Phosphoserine mark. The span at 106-118 shows a compositional bias: low complexity; it reads NNNTNTNTSISNE. Over residues 217–233 the composition is skewed to basic and acidic residues; sequence IGKNEKPQNKEGISKFA. Positions 234–249 are enriched in acidic residues; it reads EDEDYDDEDENYDEDS. Residues 250–260 are compositionally biased toward basic and acidic residues; sequence TDVKNVDDPPK. Acidic residues predominate over residues 345–360; the sequence is AATDEQDRENTNDEPD. The segment covering 362 to 376 has biased composition (polar residues); the sequence is NQKLPTPEGSTFSDT. Positions 440-546 constitute a Bromo domain; sequence IGQEELYEAC…KKSLQLIRMI (107 aa). Positions 566–578 are enriched in acidic residues; sequence KDKDYELDEEEEV. Disordered regions lie at residues 566 to 724 and 1286 to 1332; these read KDKD…YLLE and GAEN…RLNQ. Composition is skewed to basic and acidic residues over residues 593 to 634 and 644 to 697; these read LAKE…KDKT and NVNK…KEAG. Residues 698–716 are compositionally biased toward acidic residues; the sequence is ENNEEEEDDDDEDEDEDMV. Residue Ser1293 is modified to Phosphoserine. Over residues 1316 to 1332 the composition is skewed to polar residues; that stretch reads NMGSNSSFSLSLPRLNQ.

As to quaternary structure, component of the 1.8 MDa SAGA (Spt-Ada-Gcn5 acetyltransferase) complex, which is composed of 19 subunits TRA1, SPT7, TAF5, NGG1/ADA3, SGF73, SPT20/ADA5, SPT8, TAF12, TAF6, HFI1/ADA1, UBP8, GCN5, ADA2, SPT3, SGF29, TAF10, TAF9, SGF11 and SUS1. The SAGA complex is composed of 4 modules, namely the HAT (histone acetyltransferase) module (GCN5, ADA2, NGG1/ADA3 and SGF29), the DUB (deubiquitinating) module (UBP8, SGF11, SGF73 and SUS1), the core or TAF (TBP-associated factor) module (TAF5, TAF6, TAF9, TAF10 and TAF12), and the Tra1 or SPT (Suppressor of Ty) module (TRA1, HFI1/ADA1, SPT3, SPT7, SPT8 and SPT20/ADA5). The Tra1/SPT module binds activators, the core module recruits TBP (TATA-binding protein), the HAT module contains the histone H3 acetyltransferase GCN5, and the DUB module comprises the histone H2B deubiquitinase UBP8. Also identified in an altered form of SAGA, named SALSA (SAGA altered, Spt8 absent) or SLIK (SAGA-like) complex, which contains a C-terminal truncated form of SPT7 and is missing SPT8. However, it has been shown that the SAGA and SAGA-like SALSA/SLIK transcriptional coactivators are structurally and biochemically equivalent. Identified in the Ada.spt complex with NGG1/ADA3 and TRA1. Post-translationally, protease PEP4 directly cleaves the C-terminus of SPT7(SAGA) to form SPT7(SLIK) within the SAGA complex in the nucleus.

It localises to the nucleus. Its function is as follows. Component of the transcription coactivator SAGA complex. SAGA acts as a general cofactor required for essentially all RNA polymerase II transcription. At the promoters, SAGA is required for transcription pre-initiation complex (PIC) recruitment. It influences RNA polymerase II transcriptional activity through different activities such as TBP interaction (via core/TAF module) and promoter selectivity, interaction with transcription activators (via Tra1/SPT module), and chromatin modification through histone acetylation (via HAT module) and deubiquitination (via DUB module). SAGA preferentially acetylates histones H3 (to form H3K9ac, H3K14ac, H3K18ac and H3K23ac) and H2B and deubiquitinates histone H2B. SAGA interacts with DNA via upstream activating sequences (UASs). Also identified in a modified version of SAGA named SALSA or SLIK. The cleavage of SPT7 and the absence of the SPT8 subunit in SLIK neither drive any major conformational differences in its structure compared with SAGA, nor significantly affect HAT, DUB, or DNA-binding activities. The sequence is that of SAGA complex subunit SPT7 (SPT7) from Saccharomyces cerevisiae (strain ATCC 204508 / S288c) (Baker's yeast).